The following is a 395-amino-acid chain: Phosphoglycerate kinase (395 aa).

Substrate-binding positions include 22–24 (DLN), Arg37, 60–63 (HFGR), Arg116, and Arg149. Residues Lys199, Glu322, and 352 to 355 (GGDT) contribute to the ATP site.

The protein belongs to the phosphoglycerate kinase family. Monomer.

Its subcellular location is the cytoplasm. The enzyme catalyses (2R)-3-phosphoglycerate + ATP = (2R)-3-phospho-glyceroyl phosphate + ADP. Its pathway is carbohydrate degradation; glycolysis; pyruvate from D-glyceraldehyde 3-phosphate: step 2/5. The polypeptide is Phosphoglycerate kinase (Novosphingobium aromaticivorans (strain ATCC 700278 / DSM 12444 / CCUG 56034 / CIP 105152 / NBRC 16084 / F199)).